The sequence spans 1192 residues: MMDAEKVSTDGEAISEGEVGSNGETPPETEVEFIGETAPDTDVEFIGETSPGTDVEPTGESIQETEVESIGEATPGMDVEPIKKTMTELNVESIGEETSETDVDSIRKALRGIDLESITVAYPPKKAKHRKVRPQAEVESTGRAAPEGELEVSDHEKVEALLDELDELSEIVSSPEVSYSDISPLEMGEDDTNVSATSTDTFQQGIYEPIEPIEPTEPPEPAEPPKPAETPEDSTVRAPAHPYQRDFPMGARHRFRLSIMGSLTPSDTDDLPLETDEPPQQESVQSTPRALEETRIQFLDQVQSLSPEALLDRATEGSDEAEEEGSQLIVLDPDHPLMIRFQEALKGYLNRQMDKLKLDVQELDVATKQTRSQRQELGVNLYGVQQHLARLQMQLEKSHDRHSLVACERRRKEEELQCARSVYNKTCQTANEERKKLAALQTEVESLALHLFYMQNIEQDVRDDIQVMKQVVRKTETEKMHAEVEKKKQDLFVDQLTERSHQLEENIALFEAQYLSQAEDTRVLKKAVTEAITEIDTIAVEKKRILQQWTTSLVGMKHRNEAYKTVMDALRECQHQVKSTDSEIEVCKKSIMQEEEKNEKLARLLNRAETEATLVQKMTAQCLSKQEALQTEFNTYQLALQDTEEMLNKGYVEHSAVLSELQATRQAFHQEQELRQKMDMSMVDKLQEQGTSSKMTKYFHQLLRKLQKENTNLVTHLSKIDGDIAQATLDITNTNCKIDMHKKTLAEMDKEVKRFNDLITNSESEIARRTILIERKQSLINFFNKQLEQMVSELGGEEAGPLELEIKRLSKLTEEYNTGVAEAQMTWLRLQQELVQVTHEREEQLVSVDQLKKEVHIMEQKKLRIESKIAHEKKEQKIVSRHMRDLDNDLSKLNMLLDKNRCSSEELEQNNIATETEFLRTLKDSERETIQMQEKLMELSEEKATLLNSFMEAEHQIMLWEKKIQLAKEMRSSVDSETGQTEIRAMKAEIHRMKVRHGQLLKQQEKMIRDMELAVARRETIVVQAEGQSKIDKKVITKTEFHYQQRELQKKVREMHKATDDCTNTISELEETQKFLSSSLQEKQQLLSEMQATTDVLEEEINQLTALKRQNLLEIVTLQTRGKHLQAAIEGKYVFLHRNSRSQLMERKRLSVRLSQLNKVLSSVQEDYPQYQEVLQSIQQKIATKLETPEPS.

5 disordered regions span residues 1–78 (MMDA…PGMD), 126–153 (KAKH…LEVS), 173–196 (SSPE…NVSA), 211–246 (EPIE…YQRD), and 261–289 (GSLT…STPR). Acidic residues predominate over residues 27 to 45 (PETEVEFIGETAPDTDVEF). The span at 215 to 228 (PTEPPEPAEPPKPA) shows a compositional bias: pro residues. Positions 267–279 (DTDDLPLETDEPP) are enriched in acidic residues. Residue Ser306 is modified to Phosphoserine. 7 coiled-coil regions span residues 308-369 (EALL…ATKQ), 425-451 (KTCQ…ALHL), 581-649 (DSEI…MLNK), 733-768 (NTNC…EIAR), 830-871 (LQQE…KIAH), 919-972 (LRTL…EMRS), and 1044-1118 (QQRE…IVTL).

Belongs to the CCDC40 family. Specifically expressed in the embryonic node and midline.

The protein resides in the cytoplasm. It localises to the cell projection. It is found in the cilium. In terms of biological role, required for assembly of dynein regulatory complex (DRC) and inner dynein arm (IDA) complexes, which are responsible for ciliary beat regulation, thereby playing a central role in motility in cilia and flagella. Probably acts together with CCDC39 to form a molecular ruler that determines the 96 nanometer (nm) repeat length and arrangements of components in cilia and flagella. Not required for outer dynein arm complexes assembly. Required for axonemal recruitment of CCDC39. The sequence is that of Coiled-coil domain-containing protein 40 from Mus musculus (Mouse).